A 340-amino-acid chain; its full sequence is MRLLERVRKEWFMVGIVVAIGAAKLEPSVGVNGGPLKPEITVSYIAVATIFFNSGLSLKTEELTSALVHLKLHLFIQVFTLAFFPTTIWLFLQLLSVTSINEWLLKGLQTVGCMPPPVSSAVILTKAVGGNEAAAIFNSAFGSFLGIVVTPVLLLLFLGSSSSVPFTSIFSQLFMTVVVPLVIGQIVRRYIKDWLERKKPPFGVVSSSVLLMIIYTTFCDTFSNPNIDLDKFSLILILFIIVSIQLSFMLLTFVFSTRNNSGFTPADTVAIIFCSTHKSLTLGIPMLKIVFAGHEHLSLISLPLLIYHPAQILLGSVLVPTIKSWMVSRQKGVKLTRPTV.

The Cytoplasmic segment spans residues 1 to 10 (MRLLERVRKE). The helical transmembrane segment at 11-31 (WFMVGIVVAIGAAKLEPSVGV) threads the bilayer. Over 32–37 (NGGPLK) the chain is Extracellular. A helical transmembrane segment spans residues 38–58 (PEITVSYIAVATIFFNSGLSL). Residues 59–71 (KTEELTSALVHLK) are Cytoplasmic-facing. A helical membrane pass occupies residues 72–92 (LHLFIQVFTLAFFPTTIWLFL). Topologically, residues 93-116 (QLLSVTSINEWLLKGLQTVGCMPP) are extracellular. The helical transmembrane segment at 117 to 137 (PVSSAVILTKAVGGNEAAAIF) threads the bilayer. A topological domain (cytoplasmic) is located at residue Asn138. Residues 139 to 159 (SAFGSFLGIVVTPVLLLLFLG) form a helical membrane-spanning segment. At 160 to 163 (SSSS) the chain is on the extracellular side. A helical transmembrane segment spans residues 164–184 (VPFTSIFSQLFMTVVVPLVIG). Residues 185–201 (QIVRRYIKDWLERKKPP) are Cytoplasmic-facing. A helical transmembrane segment spans residues 202–222 (FGVVSSSVLLMIIYTTFCDTF). Residues 223–234 (SNPNIDLDKFSL) lie on the Extracellular side of the membrane. Residues 235–255 (ILILFIIVSIQLSFMLLTFVF) traverse the membrane as a helical segment. Over 256–270 (STRNNSGFTPADTVA) the chain is Cytoplasmic. Residues 271–291 (IIFCSTHKSLTLGIPMLKIVF) form a helical membrane-spanning segment. Residues 292-298 (AGHEHLS) lie on the Extracellular side of the membrane. Residues 299–319 (LISLPLLIYHPAQILLGSVLV) form a helical membrane-spanning segment. Residues 320-340 (PTIKSWMVSRQKGVKLTRPTV) are Cytoplasmic-facing.

The protein belongs to the bile acid:sodium symporter (BASS) (TC 2.A.28) family. As to expression, strongly expressed in liver, adrenal gland, small intestine and colon. Moderately expressed in heart, lung, kidney and spleen. Weakly expressed in brain.

It is found in the cell membrane. Its subcellular location is the endoplasmic reticulum membrane. The protein localises to the golgi apparatus membrane. Involved in teeth and skeletal development. Has an essential role in the biosynthesis and trafficking of glycosaminoglycans and glycoproteins to produce a proper functioning extracellular matrix. Required for extracellular matrix mineralization. Also involved in the regulation of cellular calcium homeostasis. Does not show transport activity towards bile acids or steroid sulfates (including taurocholate, cholate, chenodeoxycholate, estrone-3-sulfate, dehydroepiandrosterone sulfate (DHEAS) and pregnenolone sulfate). This chain is Sodium/bile acid cotransporter 7 (Slc10a7), found in Rattus norvegicus (Rat).